Reading from the N-terminus, the 388-residue chain is Proline-rich protein 5 (388 aa).

Interaction with RICTOR stretches follow at residues 10–95 and 188–218; these read MSSP…LTKG and HESR…YGLH. Positions 12–31 are disordered; sequence SPSLSDLGKREPAAAADERG. Over residues 18-31 the composition is skewed to basic and acidic residues; it reads LGKREPAAAADERG. Ser252 bears the Phosphoserine mark. The interval 254 to 388 is disordered; it reads SYNTPLLNPV…EGSGGRQSVV (135 aa). A compositionally biased stretch (polar residues) spans 336–346; the sequence is TRSSLPRSSPE.

Belongs to the PROTOR family. In terms of assembly, associated component of the mechanistic target of rapamycin complex 2 (mTORC2). Binds directly to MTOR and RICTOR within the TORC2 complex. In terms of tissue distribution, most abundant in kidney and liver. Also highly expressed in brain, spleen, testis and placenta. Overexpressed in several colorectal tumors.

In terms of biological role, associated subunit of mTORC2, which regulates cell growth and survival in response to hormonal signals. mTORC2 is activated by growth factors, but, in contrast to mTORC1, seems to be nutrient-insensitive. mTORC2 seems to function upstream of Rho GTPases to regulate the actin cytoskeleton, probably by activating one or more Rho-type guanine nucleotide exchange factors. PRR5 plays an important role in regulation of PDGFRB expression and in modulation of platelet-derived growth factor signaling. May act as a tumor suppressor in breast cancer. The protein is Proline-rich protein 5 (PRR5) of Homo sapiens (Human).